Here is a 201-residue protein sequence, read N- to C-terminus: Adenylyl-sulfate kinase (201 aa).

35–42 (GLSGSGKS) provides a ligand contact to ATP. The active-site Phosphoserine intermediate is the Ser-109.

Belongs to the APS kinase family.

It carries out the reaction adenosine 5'-phosphosulfate + ATP = 3'-phosphoadenylyl sulfate + ADP + H(+). Its pathway is sulfur metabolism; hydrogen sulfide biosynthesis; sulfite from sulfate: step 2/3. Catalyzes the synthesis of activated sulfate. This chain is Adenylyl-sulfate kinase, found in Salmonella gallinarum (strain 287/91 / NCTC 13346).